We begin with the raw amino-acid sequence, 337 residues long: Primase homolog protein (337 aa).

Residues 205–304 (SEIIIVEGEP…WLVKWPKKSE (100 aa)) form the Toprim domain. Mg(2+)-binding residues include Glu211, Asp273, and Asp275.

It depends on Mg(2+) as a cofactor.

Its function is as follows. May act as a DNA primase. The sequence is that of Primase homolog protein from Arabidopsis thaliana (Mouse-ear cress).